Consider the following 257-residue polypeptide: Enterotoxin type E (257 aa).

Residues 1–27 (MKKTAFILLLFIALTLTTSPLVNGSEK) form the signal peptide. Cys120 and Cys130 are disulfide-bonded. Positions 211, 249, and 251 each coordinate Zn(2+).

Belongs to the staphylococcal/streptococcal toxin family. In terms of assembly, interacts with host MHC class II molecules composed of alpha/HLA-DRA and beta/HLA-DRB1 chains. Interacts with host T-cell receptor beta variable TRBV7-9. Zn(2+) is required as a cofactor.

Its subcellular location is the secreted. In terms of biological role, staphylococcal enterotoxin that activates the host immune system by binding as unprocessed molecules to major histocompatibility (MHC) complex class II and T-cell receptor (TCR) molecules. In turn, this ternary complex activates a large number of T-lymphocytes initiating a systemic release of pro-inflammatory cytokines. Also causes the intoxication staphylococcal food poisoning syndrome. The protein is Enterotoxin type E (entE) of Staphylococcus aureus.